Consider the following 306-residue polypeptide: Putative lipid kinase Sca_1050 (306 aa).

A DAGKc domain is found at 3–139; the sequence is QHFHRGILFY…FDVLKVNDTY (137 aa). ATP is bound by residues serine 44, 74–80, and threonine 101; that span reads GDGTVNE. Mg(2+) is bound by residues serine 220, aspartate 223, and glutamate 225. Glutamate 281 acts as the Proton acceptor in catalysis.

This sequence belongs to the diacylglycerol/lipid kinase family. Requires Mg(2+) as cofactor.

Functionally, may catalyze the ATP-dependent phosphorylation of lipids other than diacylglycerol (DAG). This chain is Putative lipid kinase Sca_1050, found in Staphylococcus carnosus (strain TM300).